The following is a 342-amino-acid chain: Heat-inducible transcription repressor HrcA (342 aa).

The protein belongs to the HrcA family.

Negative regulator of class I heat shock genes (grpE-dnaK-dnaJ and groELS operons). Prevents heat-shock induction of these operons. The sequence is that of Heat-inducible transcription repressor HrcA from Acholeplasma laidlawii.